A 190-amino-acid polypeptide reads, in one-letter code: Apolipoprotein M (190 aa).

Residues 1 to 17 (MFHQVWAALLYLYGLLF) form the signal peptide. 3 cysteine pairs are disulfide-bonded: cysteine 23/cysteine 169, cysteine 95/cysteine 185, and cysteine 130/cysteine 159. Residues glutamate 138 and arginine 145 each contribute to the tetradecanoate site.

It belongs to the calycin superfamily. Lipocalin family. Highly divergent. As to quaternary structure, interacts with LRP2; LRP2 mediates APOM renal uptake and subsequent lysosomal degradation. Expressed by the liver; secreted in plasma.

The protein localises to the secreted. Its function is as follows. Probably involved in lipid transport. Can bind sphingosine-1-phosphate, myristic acid, palmitic acid and stearic acid, retinol, all-trans-retinoic acid and 9-cis-retinoic acid. In Rattus norvegicus (Rat), this protein is Apolipoprotein M (Apom).